The chain runs to 429 residues: MKKQNNLRSLAAQAVELVVEQGQSLSNVLPPLQQKVADKDKALLQELCFGVLRTLSQLEWLINKLMSRPMTGKQRTVHYLIMVGFYQLLYTRVPPHAALAETVEGAVSIKRPQLKGLINGVLRQFQRQQETLLNEFATSDARFLHPGWLVKRLQNAYPTQWQRIIEANNQRPPMWLRVNRTHHTRDGWLGLLEDAGMKGYPHPDYPDAVRLETPAPVHALPGFAEGWVTVQDASAQGCAVFLAPQNGEHILDLCAAPGGKTTHILEVAPEADVLAVDIDEQRLSRVYDNLKRLGMKATVKQGDGRYPAQWCGEQQFDRILLDAPCSATGVIRRHPDIKWLRRDRDIAELAQLQAEILDAVWPRLKPGGTLVYATCSVLPEENRDQIKAFLQRTPDAALSETGTPDQPGQQNLPGGEEGDGFFYAKLIKK.

S-adenosyl-L-methionine is bound by residues 254–260 (CAAPGGK), aspartate 277, aspartate 303, and aspartate 322. Residue cysteine 375 is the Nucleophile of the active site. The interval 397–419 (ALSETGTPDQPGQQNLPGGEEGD) is disordered. The span at 400 to 412 (ETGTPDQPGQQNL) shows a compositional bias: polar residues.

The protein belongs to the class I-like SAM-binding methyltransferase superfamily. RsmB/NOP family.

The protein resides in the cytoplasm. It carries out the reaction cytidine(967) in 16S rRNA + S-adenosyl-L-methionine = 5-methylcytidine(967) in 16S rRNA + S-adenosyl-L-homocysteine + H(+). Specifically methylates the cytosine at position 967 (m5C967) of 16S rRNA. In Salmonella typhi, this protein is Ribosomal RNA small subunit methyltransferase B.